We begin with the raw amino-acid sequence, 413 residues long: ATP phosphoribosyltransferase 2, chloroplastic (413 aa).

Residues 1-57 constitute a chloroplast transit peptide; sequence MPISIPLNATLQYSSPSSSSSSSSLVPSSPLFSPIPSTTVSLTGIRQRCLRMVTSCV.

This sequence belongs to the ATP phosphoribosyltransferase family. Long subfamily. Requires Mg(2+) as cofactor.

It is found in the plastid. The protein resides in the chloroplast. It carries out the reaction 1-(5-phospho-beta-D-ribosyl)-ATP + diphosphate = 5-phospho-alpha-D-ribose 1-diphosphate + ATP. It functions in the pathway amino-acid biosynthesis; L-histidine biosynthesis; L-histidine from 5-phospho-alpha-D-ribose 1-diphosphate: step 1/9. Feedback inhibited by L-histidine. In terms of biological role, catalyzes the condensation of ATP and 5-phosphoribose 1-diphosphate to form N'-(5'-phosphoribosyl)-ATP (PR-ATP). This is ATP phosphoribosyltransferase 2, chloroplastic (HISN1B) from Arabidopsis thaliana (Mouse-ear cress).